A 228-amino-acid chain; its full sequence is Elongation factor 1-beta 1 (228 aa).

An N-acetylalanine modification is found at Ala2. Residues 14 to 65 (LKTLEEHLAGKTYISGDQLSVDDVKVYAAVLENPGDGFPNASKWYDSVASHL) form the GST C-terminal domain. Residues 75-139 (GVRVGGGVAP…DTKKTKESGK (65 aa)) are disordered. Acidic residues predominate over residues 95–115 (PAADGDGDDDDDIDLFADETE). The segment covering 116–138 (DEKKAAEEREAAKKDTKKTKESG) has biased composition (basic and acidic residues).

It belongs to the EF-1-beta/EF-1-delta family. In terms of assembly, EF-1 is composed of 4 subunits: alpha, beta (1B-alpha=beta'), delta (1B-beta), and gamma (1B-gamma).

It is found in the cell membrane. In terms of biological role, EF-1-beta and EF-1-delta stimulate the exchange of GDP bound to EF-1-alpha to GTP. This is Elongation factor 1-beta 1 from Arabidopsis thaliana (Mouse-ear cress).